Consider the following 142-residue polypeptide: Small ribosomal subunit protein uS11 (142 aa).

The disordered stretch occupies residues 1 to 21; sequence MPPKTRGAVRKPRRKDKKNIA. Over residues 7 to 17 the composition is skewed to basic residues; it reads GAVRKPRRKDK.

This sequence belongs to the universal ribosomal protein uS11 family. Part of the 30S ribosomal subunit. Interacts with proteins S7 and S18. Binds to IF-3.

Functionally, located on the platform of the 30S subunit, it bridges several disparate RNA helices of the 16S rRNA. Forms part of the Shine-Dalgarno cleft in the 70S ribosome. In Paenarthrobacter aurescens (strain TC1), this protein is Small ribosomal subunit protein uS11.